Here is a 108-residue protein sequence, read N- to C-terminus: Pyrimidine/purine nucleoside phosphorylase (108 aa).

This sequence belongs to the nucleoside phosphorylase PpnP family.

The enzyme catalyses a purine D-ribonucleoside + phosphate = a purine nucleobase + alpha-D-ribose 1-phosphate. It carries out the reaction adenosine + phosphate = alpha-D-ribose 1-phosphate + adenine. The catalysed reaction is cytidine + phosphate = cytosine + alpha-D-ribose 1-phosphate. It catalyses the reaction guanosine + phosphate = alpha-D-ribose 1-phosphate + guanine. The enzyme catalyses inosine + phosphate = alpha-D-ribose 1-phosphate + hypoxanthine. It carries out the reaction thymidine + phosphate = 2-deoxy-alpha-D-ribose 1-phosphate + thymine. The catalysed reaction is uridine + phosphate = alpha-D-ribose 1-phosphate + uracil. It catalyses the reaction xanthosine + phosphate = alpha-D-ribose 1-phosphate + xanthine. Functionally, catalyzes the phosphorolysis of diverse nucleosides, yielding D-ribose 1-phosphate and the respective free bases. Can use uridine, adenosine, guanosine, cytidine, thymidine, inosine and xanthosine as substrates. Also catalyzes the reverse reactions. The protein is Pyrimidine/purine nucleoside phosphorylase of Polaromonas sp. (strain JS666 / ATCC BAA-500).